The sequence spans 205 residues: Pyrrolidone-carboxylate peptidase (205 aa).

Active-site residues include Glu-79, Cys-142, and His-165.

This sequence belongs to the peptidase C15 family. In terms of assembly, homotetramer.

The protein localises to the cytoplasm. The catalysed reaction is Release of an N-terminal pyroglutamyl group from a polypeptide, the second amino acid generally not being Pro.. In terms of biological role, removes 5-oxoproline from various penultimate amino acid residues except L-proline. In Gloeobacter violaceus (strain ATCC 29082 / PCC 7421), this protein is Pyrrolidone-carboxylate peptidase.